The following is a 706-amino-acid chain: Signal transducer and activator of transcription 1 (706 aa).

The SH2 domain occupies 477 to 574 (WCIGFISKND…EEMLRFFESE (98 aa)).

Belongs to the transcription factor STAT family. As to quaternary structure, forms a homodimer or a heterodimer with a related family member. In terms of tissue distribution, expressed in adult and larval pharynx, head ganglia, tail ganglia, ventral nerve cord and body muscles.

It localises to the cytoplasm. It is found in the nucleus. Its function is as follows. Carries out a dual function: signal transduction and activation of transcription. Activated STAT proteins play a role in repression of dauer formation. Neuronal expression is held in check by negative signals through the TGF-beta pathway that target the daf-3 transcription factor. This chain is Signal transducer and activator of transcription 1, found in Caenorhabditis elegans.